A 57-amino-acid polypeptide reads, in one-letter code: Large ribosomal subunit protein bL32 (57 aa).

This sequence belongs to the bacterial ribosomal protein bL32 family.

This chain is Large ribosomal subunit protein bL32, found in Shouchella clausii (strain KSM-K16) (Alkalihalobacillus clausii).